The chain runs to 209 residues: Thymidine kinase (209 aa).

ATP-binding positions include 9–16 (AAMNAGKS) and 88–91 (DEAQ). Catalysis depends on Glu-89, which acts as the Proton acceptor. Positions 146, 148, 183, and 186 each coordinate Zn(2+).

The protein belongs to the thymidine kinase family. In terms of assembly, homotetramer.

The protein localises to the cytoplasm. The catalysed reaction is thymidine + ATP = dTMP + ADP + H(+). The polypeptide is Thymidine kinase (Legionella pneumophila subsp. pneumophila (strain Philadelphia 1 / ATCC 33152 / DSM 7513)).